The following is a 950-amino-acid chain: Translation initiation factor IF-2 (950 aa).

Disordered stretches follow at residues 57–254 and 304–328; these read LAER…AVVI and DVSR…KSLS. Composition is skewed to low complexity over residues 101–131 and 139–169; these read AEPQ…EPAA and AAPL…QPAA. A compositionally biased stretch (pro residues) spans 170–215; it reads PAAPPAPTAQPSAPPPAAAQPRPPQPSAPSRPPPPGYRPAPPPGAR. Low complexity predominate over residues 216 to 233; that stretch reads PPVSAAPGAPGQPGAAGQ. The region spanning 449–618 is the tr-type G domain; it reads IRPPVVTVMG…ALQSEVLELK (170 aa). The G1 stretch occupies residues 458-465; sequence GHVDHGKT. GTP is bound at residue 458–465; sequence GHVDHGKT. The tract at residues 483 to 487 is G2; the sequence is GITQH. The tract at residues 504-507 is G3; it reads DTPG. GTP-binding positions include 504–508 and 558–561; these read DTPGH and NKVD. The tract at residues 558-561 is G4; it reads NKVD. The segment at 594 to 596 is G5; sequence SAR.

It belongs to the TRAFAC class translation factor GTPase superfamily. Classic translation factor GTPase family. IF-2 subfamily.

The protein localises to the cytoplasm. Functionally, one of the essential components for the initiation of protein synthesis. Protects formylmethionyl-tRNA from spontaneous hydrolysis and promotes its binding to the 30S ribosomal subunits. Also involved in the hydrolysis of GTP during the formation of the 70S ribosomal complex. The chain is Translation initiation factor IF-2 from Anaeromyxobacter dehalogenans (strain 2CP-C).